The primary structure comprises 33 residues: Cysteine-rich venom protein tripurin (33 aa).

This sequence belongs to the CRISP family. In terms of processing, contains 8 disulfide bonds. As to expression, expressed by the venom gland.

It is found in the secreted. Blocks contraction of smooth muscle elicited by high potassium-induced depolarization, but does not block caffeine-stimulated contraction. May target voltage-gated calcium channels on smooth muscle. This Trimeresurus purpureomaculatus (Mangrove pit viper) protein is Cysteine-rich venom protein tripurin.